Reading from the N-terminus, the 356-residue chain is MAGLVNINIEFKELATSFIQRSKAGIVAIILKDTTKMYKELTSEDDIPISLSADNKKYIKYGFVGATDNEKVLRPSKVIISTFTEDGKVEDILEELESVEFNYLCMPEAIEAEKTKIVTWIKKIREEESTEAKAVLANIKADNEAIINFTENVVVDGEEITAEKYTTRVASLIASTPNTQSITYAPLDEVESIVKIDKASADAKVQAGELILRRLSGKIRIARGINSLTTLTAEKGEIFQKIKLVDTKDLISKDIKNIYVEKYLRKCPNTYDNKCLFIVAVQSYLTELAKQELIDSNFTVEIDLEKQKEYLEGKKIAVSKMKENEIKEANTGSNGFYLINLKLVDAMEDINIRVQM.

The protein belongs to the myoviridae tail sheath protein family. In terms of assembly, homomultimer.

The protein resides in the virion. Its subcellular location is the host cytoplasm. Its function is as follows. Polymerizes as an extended structure around the baseplate-tail tube complex. During ejection, the sheath shifts to a contracted form, thereby making the inner tail tube protrude through the host cell envelope. In Clostridioides difficile (Peptoclostridium difficile), this protein is Tail sheath protein.